Consider the following 159-residue polypeptide: UPF0336 protein ML1910 (159 aa).

The protein belongs to the UPF0336 family.

In Mycobacterium leprae (strain TN), this protein is UPF0336 protein ML1910.